Reading from the N-terminus, the 273-residue chain is MADKKKKGSKKGGKKVDPFTRKEWYVVRAPTQFFKSPADNKVGFTPVNRTQGTKLASDGLKGRVYEVSLADMKDDESQVFRKIKLRAEEVEGRNVLTNFYGMDLTSDKLRSLIHKWSTLIECFVDVKTTDGYFLRVFAICFTKKGESQKKKTSYAKTSRVKAIRKKMVDILTETVSSNDLKTVVDYLIGVSLNGVTTNASGFAPTLAEKIRIEGSSIFPIHNVFIRKVKVLKTPKVDAAKLSELYASSATSTIAPTEEVGTAVERTEETTTTA.

This sequence belongs to the eukaryotic ribosomal protein eS1 family. As to quaternary structure, component of the small ribosomal subunit. Mature ribosomes consist of a small (40S) and a large (60S) subunit. The 40S subunit contains about 33 different proteins and 1 molecule of RNA (18S). The 60S subunit contains about 49 different proteins and 3 molecules of RNA (25S, 5.8S and 5S).

It localises to the cytoplasm. This is Small ribosomal subunit protein eS1 (rps3a) from Dictyostelium discoideum (Social amoeba).